The chain runs to 255 residues: Ribosomal RNA small subunit methyltransferase J (255 aa).

Residues 107–108 (RD), 123–124 (ER), and Asp178 contribute to the S-adenosyl-L-methionine site. A disordered region spans residues 228 to 247 (ARAEPLSGRKPSHQIPGKTT).

It belongs to the methyltransferase superfamily. RsmJ family.

It localises to the cytoplasm. It carries out the reaction guanosine(1516) in 16S rRNA + S-adenosyl-L-methionine = N(2)-methylguanosine(1516) in 16S rRNA + S-adenosyl-L-homocysteine + H(+). Specifically methylates the guanosine in position 1516 of 16S rRNA. This is Ribosomal RNA small subunit methyltransferase J from Thioalkalivibrio sulfidiphilus (strain HL-EbGR7).